A 270-amino-acid polypeptide reads, in one-letter code: 3-methyl-2-oxobutanoate hydroxymethyltransferase (270 aa).

Residues D53 and D92 each contribute to the Mg(2+) site. Residues 53–54 (DS), D92, and K120 contribute to the 3-methyl-2-oxobutanoate site. Residue E122 coordinates Mg(2+). Residue E189 is the Proton acceptor of the active site.

The protein belongs to the PanB family. In terms of assembly, homodecamer; pentamer of dimers. The cofactor is Mg(2+).

The protein resides in the cytoplasm. It carries out the reaction 3-methyl-2-oxobutanoate + (6R)-5,10-methylene-5,6,7,8-tetrahydrofolate + H2O = 2-dehydropantoate + (6S)-5,6,7,8-tetrahydrofolate. Its pathway is cofactor biosynthesis; (R)-pantothenate biosynthesis; (R)-pantoate from 3-methyl-2-oxobutanoate: step 1/2. In terms of biological role, catalyzes the reversible reaction in which hydroxymethyl group from 5,10-methylenetetrahydrofolate is transferred onto alpha-ketoisovalerate to form ketopantoate. This Saccharophagus degradans (strain 2-40 / ATCC 43961 / DSM 17024) protein is 3-methyl-2-oxobutanoate hydroxymethyltransferase.